The chain runs to 304 residues: Homoserine kinase (304 aa).

90 to 100 (PLARGLGSSAS) provides a ligand contact to ATP.

It belongs to the GHMP kinase family. Homoserine kinase subfamily.

The protein resides in the cytoplasm. It carries out the reaction L-homoserine + ATP = O-phospho-L-homoserine + ADP + H(+). Its pathway is amino-acid biosynthesis; L-threonine biosynthesis; L-threonine from L-aspartate: step 4/5. Its function is as follows. Catalyzes the ATP-dependent phosphorylation of L-homoserine to L-homoserine phosphate. The sequence is that of Homoserine kinase from Staphylococcus aureus (strain MRSA252).